Reading from the N-terminus, the 157-residue chain is Large ribosomal subunit protein uL11 (157 aa).

This sequence belongs to the universal ribosomal protein uL11 family. As to quaternary structure, part of the ribosomal stalk of the 50S ribosomal subunit. Interacts with L10 and the large rRNA to form the base of the stalk. L10 forms an elongated spine to which L12 dimers bind in a sequential fashion forming a multimeric L10(L12)X complex.

Forms part of the ribosomal stalk which helps the ribosome interact with GTP-bound translation factors. The protein is Large ribosomal subunit protein uL11 of Archaeoglobus fulgidus (strain ATCC 49558 / DSM 4304 / JCM 9628 / NBRC 100126 / VC-16).